We begin with the raw amino-acid sequence, 249 residues long: Probable septum site-determining protein MinC (249 aa).

A disordered region spans residues 115–144 (PTAVSPPPPPPPPPARAEPAPPAARPAPGR). Residues 118-139 (VSPPPPPPPPPARAEPAPPAAR) are compositionally biased toward pro residues.

Belongs to the MinC family. Interacts with MinD and FtsZ.

Its function is as follows. Cell division inhibitor that blocks the formation of polar Z ring septums. Rapidly oscillates between the poles of the cell to destabilize FtsZ filaments that have formed before they mature into polar Z rings. Prevents FtsZ polymerization. The polypeptide is Probable septum site-determining protein MinC (Xanthomonas axonopodis pv. citri (strain 306)).